We begin with the raw amino-acid sequence, 717 residues long: Acetone carboxylase beta subunit (717 aa).

As to quaternary structure, heterohexamer of two alpha, two beta and two gamma subunits. Fe cation is required as a cofactor. Mg(2+) serves as cofactor. The cofactor is Zn(2+). The N-terminus is blocked.

The enzyme catalyses acetone + hydrogencarbonate + 2 ATP + 3 H2O = acetoacetate + 2 AMP + 4 phosphate + 4 H(+). Catalyzes the carboxylation of acetone to form acetoacetate. Has a reduced activity on butanone, and no activity on 2-pentatone, 3-pentatone, 2-hexanone, chloroacetone, pyruvate, phosphoenolpyruvate, acetaldehyde, propionaldehyde and propylene oxide. This is Acetone carboxylase beta subunit from Xanthobacter autotrophicus (strain ATCC BAA-1158 / Py2).